We begin with the raw amino-acid sequence, 210 residues long: Meiotic coiled-coil protein 7 (210 aa).

Residues 77–148 (KRSRESVLGS…LKTQLSNLNH (72 aa)) are a coiled coil.

Belongs to the MND1 family. As to quaternary structure, interacts with meu13.

The protein localises to the cytoplasm. It localises to the nucleus. In terms of biological role, required for meiotic recombination. The chain is Meiotic coiled-coil protein 7 (mcp7) from Schizosaccharomyces pombe (strain 972 / ATCC 24843) (Fission yeast).